We begin with the raw amino-acid sequence, 399 residues long: Argininosuccinate synthase (399 aa).

ATP contacts are provided by residues 10 to 18 (AYSGGVDTS) and A38. An L-citrulline-binding site is contributed by Y89. Residue G119 coordinates ATP. The L-aspartate site is built by T121, N125, and D126. N125 is a binding site for L-citrulline. R129, S177, S186, E262, and Y274 together coordinate L-citrulline.

This sequence belongs to the argininosuccinate synthase family. Type 1 subfamily. As to quaternary structure, homotetramer.

The protein localises to the cytoplasm. It catalyses the reaction L-citrulline + L-aspartate + ATP = 2-(N(omega)-L-arginino)succinate + AMP + diphosphate + H(+). It participates in amino-acid biosynthesis; L-arginine biosynthesis; L-arginine from L-ornithine and carbamoyl phosphate: step 2/3. The protein is Argininosuccinate synthase of Picosynechococcus sp. (strain ATCC 27264 / PCC 7002 / PR-6) (Agmenellum quadruplicatum).